A 174-amino-acid chain; its full sequence is uncharacterized protein (174 aa).

The protein to E.coli HemX C-terminal region.

This is an uncharacterized protein from Haemophilus influenzae (strain ATCC 51907 / DSM 11121 / KW20 / Rd).